The following is a 362-amino-acid chain: Cobalt-precorrin-5B C(1)-methyltransferase (362 aa).

This sequence belongs to the CbiD family.

It catalyses the reaction Co-precorrin-5B + S-adenosyl-L-methionine = Co-precorrin-6A + S-adenosyl-L-homocysteine. It participates in cofactor biosynthesis; adenosylcobalamin biosynthesis; cob(II)yrinate a,c-diamide from sirohydrochlorin (anaerobic route): step 6/10. Catalyzes the methylation of C-1 in cobalt-precorrin-5B to form cobalt-precorrin-6A. The sequence is that of Cobalt-precorrin-5B C(1)-methyltransferase from Burkholderia lata (strain ATCC 17760 / DSM 23089 / LMG 22485 / NCIMB 9086 / R18194 / 383).